A 405-amino-acid polypeptide reads, in one-letter code: Serine/threonine-protein kinase 2 (405 aa).

The Protein kinase domain maps to 54 to 405 (NDDFYHISTG…IFSDWINGGN (352 aa)). Residues 60–68 (ISTGGYGIV) and K84 each bind ATP. Catalysis depends on D274, which acts as the Proton acceptor.

The protein belongs to the protein kinase superfamily. Ser/Thr protein kinase family. Poxviruses subfamily. Post-translationally, phosphorylated in vivo. Autophosphorylated in vitro.

It is found in the host endoplasmic reticulum. The protein localises to the host endoplasmic reticulum-Golgi intermediate compartment. The enzyme catalyses L-seryl-[protein] + ATP = O-phospho-L-seryl-[protein] + ADP + H(+). It carries out the reaction L-threonyl-[protein] + ATP = O-phospho-L-threonyl-[protein] + ADP + H(+). Functionally, essential serine-protein kinase involved in the early stage of virion morphogenesis. The polypeptide is Serine/threonine-protein kinase 2 (OPG054) (Vaccinia virus (strain L-IVP) (VACV)).